A 306-amino-acid chain; its full sequence is Protein YIPF1 (306 aa).

Over 1–119 (MAAVDDLQFE…VRLYIRSNPD (119 aa)) the chain is Cytoplasmic. The tract at residues 14-62 (NAATSLTANPDATTVNIEDPGETPKHQPGSPRGSGREEDDELLGNDDSD) is disordered. Positions 15–29 (AATSLTANPDATTVN) are enriched in polar residues. Positions 50-59 (EEDDELLGND) are enriched in acidic residues. The chain crosses the membrane as a helical span at residues 120–140 (LYGPFWICATLVFAIAISGNL). Residues 141–162 (SNFLIHLGEKTYHYVPEFRKVS) are Lumenal-facing. The helical transmembrane segment at 163 to 183 (IAATIIYAYAWLVPLALWGFL) threads the bilayer. Topologically, residues 184 to 200 (MWRNSKVMNIVSYSFLE) are cytoplasmic. The helical transmembrane segment at 201–221 (IVCVYGYSLFIYIPTAILWII) threads the bilayer. The Lumenal segment spans residues 222-227 (PQKAVR). The chain crosses the membrane as a helical span at residues 228–248 (WILVMIALGISGSLLAMTFWP). Topologically, residues 249-256 (AVREDNRR) are cytoplasmic. The chain crosses the membrane as a helical span at residues 257-277 (VALATIVTIVLLHMLLSVGCL). Residues 278–306 (AYFFDAPEMDHLPTTTATPNQTVAAAKSS) lie on the Lumenal side of the membrane. Asn-297 carries N-linked (GlcNAc...) asparagine glycosylation.

Belongs to the YIP1 family. In terms of assembly, interacts with YIPF6; this interaction may stabilize YIPF1. May also form a ternary complex with YIPF2 and YIPF6.

The protein localises to the golgi apparatus. Its subcellular location is the cis-Golgi network membrane. It localises to the trans-Golgi network membrane. It is found in the late endosome membrane. This Homo sapiens (Human) protein is Protein YIPF1 (YIPF1).